A 202-amino-acid polypeptide reads, in one-letter code: MANLLFALAAYLIGSVSFAVVVSKVMGLPDPHTYGSGNPGATNVLRTGNKKAAIFTLIGDGLKGWLAVWLASRFGPAYGLDDNGLAMVALAVFLGHLFPVFHRFAGGKGVATAAGVLLAINPILGLATLATWVIIAFFFRYSSLAALVAAIFAPVFYVLMEGIDAMAGAVLIIAILLIARHRQNIAKLLTGKESRIGEKKKV.

Helical transmembrane passes span 2–22, 85–105, 119–139, and 158–178; these read ANLL…AVVV, LAMV…HRFA, AINP…AFFF, and VLME…ILLI.

Belongs to the PlsY family. In terms of assembly, probably interacts with PlsX.

It is found in the cell inner membrane. The catalysed reaction is an acyl phosphate + sn-glycerol 3-phosphate = a 1-acyl-sn-glycero-3-phosphate + phosphate. The protein operates within lipid metabolism; phospholipid metabolism. In terms of biological role, catalyzes the transfer of an acyl group from acyl-phosphate (acyl-PO(4)) to glycerol-3-phosphate (G3P) to form lysophosphatidic acid (LPA). This enzyme utilizes acyl-phosphate as fatty acyl donor, but not acyl-CoA or acyl-ACP. The chain is Glycerol-3-phosphate acyltransferase from Cupriavidus pinatubonensis (strain JMP 134 / LMG 1197) (Cupriavidus necator (strain JMP 134)).